A 139-amino-acid polypeptide reads, in one-letter code: Protein Turandot B (139 aa).

The first 21 residues, 1–21 (MNFKTALICFALLLIGTLCSA), serve as a signal peptide directing secretion.

Belongs to the Turandot family.

Its subcellular location is the secreted. Its function is as follows. A humoral factor that may play a role in stress tolerance. In Drosophila simulans (Fruit fly), this protein is Protein Turandot B.